The following is a 303-amino-acid chain: Leukocyte immunoglobulin-like receptor subfamily B member 4B (303 aa).

The signal sequence occupies residues 1-23; it reads MIAMLTVLLYLALILEPRTAVQA. The Extracellular segment spans residues 24-238; that stretch reads GHLPKPIIWA…TEDGLETYQK (215 aa). Ig-like C2-type domains follow at residues 42-123 and 124-212; these read YTSV…AYEN and PSLS…KPSN. Cysteine 49 and cysteine 98 are oxidised to a cystine. N-linked (GlcNAc...) asparagine glycans are attached at residues asparagine 79, asparagine 133, and asparagine 191. The cysteines at positions 144 and 196 are disulfide-linked. Residues 239–260 traverse the membrane as a helical segment; the sequence is ILIGVLVSFLLLFFLLLFLILI. Topologically, residues 261–303 are cytoplasmic; it reads GYQCRHKNKANASVKNTQSEDNAELNSWNPQNEDPPRELCTPR. The segment covering 275 to 292 has biased composition (polar residues); it reads KNTQSEDNAELNSWNPQN. The disordered stretch occupies residues 275-303; it reads KNTQSEDNAELNSWNPQNEDPPRELCTPR.

In terms of assembly, monomer and homodimer. Expressed on mast cells (at protein level). Also expressed at much lower levels on natural killer cells (at protein level).

It is found in the cell membrane. Plays a role in mast cell activation. In Mus musculus (Mouse), this protein is Leukocyte immunoglobulin-like receptor subfamily B member 4B.